A 382-amino-acid polypeptide reads, in one-letter code: Galactokinase (382 aa).

34 to 37 (EHTD) lines the substrate pocket. 124–130 (GAGLSSS) is a binding site for ATP. Ser130 and Glu162 together coordinate Mg(2+). Asp174 serves as the catalytic Proton acceptor. Tyr223 provides a ligand contact to substrate.

It belongs to the GHMP kinase family. GalK subfamily.

The protein localises to the cytoplasm. The enzyme catalyses alpha-D-galactose + ATP = alpha-D-galactose 1-phosphate + ADP + H(+). It participates in carbohydrate metabolism; galactose metabolism. Catalyzes the transfer of the gamma-phosphate of ATP to D-galactose to form alpha-D-galactose-1-phosphate (Gal-1-P). In Erwinia tasmaniensis (strain DSM 17950 / CFBP 7177 / CIP 109463 / NCPPB 4357 / Et1/99), this protein is Galactokinase.